A 110-amino-acid polypeptide reads, in one-letter code: Phosphoribosyl-ATP pyrophosphatase (110 aa).

It belongs to the PRA-PH family.

Its subcellular location is the cytoplasm. The enzyme catalyses 1-(5-phospho-beta-D-ribosyl)-ATP + H2O = 1-(5-phospho-beta-D-ribosyl)-5'-AMP + diphosphate + H(+). The protein operates within amino-acid biosynthesis; L-histidine biosynthesis; L-histidine from 5-phospho-alpha-D-ribose 1-diphosphate: step 2/9. This is Phosphoribosyl-ATP pyrophosphatase from Hahella chejuensis (strain KCTC 2396).